We begin with the raw amino-acid sequence, 152 residues long: Ribosome maturation factor RimP (152 aa).

It belongs to the RimP family.

Its subcellular location is the cytoplasm. Functionally, required for maturation of 30S ribosomal subunits. The sequence is that of Ribosome maturation factor RimP from Alteromonas mediterranea (strain DSM 17117 / CIP 110805 / LMG 28347 / Deep ecotype).